The primary structure comprises 441 residues: Ribulose bisphosphate carboxylase large chain (441 aa).

Substrate contacts are provided by Asn-89 and Thr-139. The active-site Proton acceptor is the Lys-141. Lys-143 is a substrate binding site. Mg(2+)-binding residues include Lys-167, Asp-169, and Glu-170. At Lys-167 the chain carries N6-carboxylysine. His-260 serves as the catalytic Proton acceptor. Substrate-binding residues include Xaa-261, His-293, and Ser-345.

Belongs to the RuBisCO large chain family. Type I subfamily. Heterohexadecamer of 8 large chains and 8 small chains; disulfide-linked. The disulfide link is formed within the large subunit homodimers. Mg(2+) serves as cofactor. In terms of processing, the disulfide bond which can form in the large chain dimeric partners within the hexadecamer appears to be associated with oxidative stress and protein turnover.

The protein resides in the plastid. The protein localises to the chloroplast. It catalyses the reaction 2 (2R)-3-phosphoglycerate + 2 H(+) = D-ribulose 1,5-bisphosphate + CO2 + H2O. It carries out the reaction D-ribulose 1,5-bisphosphate + O2 = 2-phosphoglycolate + (2R)-3-phosphoglycerate + 2 H(+). In terms of biological role, ruBisCO catalyzes two reactions: the carboxylation of D-ribulose 1,5-bisphosphate, the primary event in carbon dioxide fixation, as well as the oxidative fragmentation of the pentose substrate in the photorespiration process. Both reactions occur simultaneously and in competition at the same active site. This Apocynum cannabinum (Hemp dogbane) protein is Ribulose bisphosphate carboxylase large chain.